The chain runs to 1377 residues: Carboxypeptidase D (1377 aa).

The first 37 residues, 1-37, serve as a signal peptide directing secretion; it reads MASGRDERPPWRLGRLRLLPPPPLLLLLLLLRSSAQA. The Extracellular portion of the chain corresponds to 38 to 1296; the sequence is AHIKKAEATT…DNRIFGLPRE (1259 aa). The 318-residue stretch at 62 to 379 folds into the Peptidase M14 1 domain; sequence HYYHEAALGE…ESLITLIEKV (318 aa). Zn(2+) is bound by residues histidine 138 and glutamate 141. The Cell attachment site signature appears at 161–163; the sequence is RGD. N-linked (GlcNAc...) asparagine glycans are attached at residues asparagine 171 and asparagine 216. Residues 188–231 are disordered; it reads RAREGDCGLGDSGPPGTSGRDNSRGRDLNRSFPDQFSTGEPPSL. Residue histidine 256 coordinates Zn(2+). The residue at position 264 (tyrosine 264) is a Phosphotyrosine. At serine 269 the chain carries Phosphoserine. Residue glutamate 349 is the Proton donor/acceptor of the active site. Asparagine 398, asparagine 409, asparagine 428, and asparagine 521 each carry an N-linked (GlcNAc...) asparagine glycan. The Peptidase M14 2 domain maps to 501–791; the sequence is HHHHFPDMEI…RSLIQFMKQV (291 aa). Zn(2+) is bound by residues histidine 563 and glutamate 566. Asparagine 625 is a glycosylation site (N-linked (GlcNAc...) asparagine). Histidine 670 provides a ligand contact to Zn(2+). The active-site Proton donor/acceptor is the glutamate 761. Residues asparagine 810, asparagine 854, asparagine 866, asparagine 878, asparagine 952, and asparagine 975 are each glycosylated (N-linked (GlcNAc...) asparagine). Positions 874-898 are disordered; that stretch reads ADANNESKKGRGHSTSTDDTSDPTS. In terms of domain architecture, Peptidase M14 3 spans 929–1208; sequence RYHSYKDLSE…KSLLSMLVEV (280 aa). Residues 1038 to 1047 are compositionally biased toward basic and acidic residues; that stretch reads RERAQEKDCT. The disordered stretch occupies residues 1038 to 1064; that stretch reads RERAQEKDCTSKTGHTNAHGKDLDTDF. N-linked (GlcNAc...) asparagine glycosylation is found at asparagine 1067 and asparagine 1139. The chain crosses the membrane as a helical span at residues 1297 to 1317; it reads LVVTVSGATMSALILTACIIW. Residues cysteine 1314, cysteine 1318, and cysteine 1320 are each lipidated (S-palmitoyl cysteine). Residues 1318–1377 are Cytoplasmic-facing; sequence CICSIKSNRHKDGFHRLRQHHDEYEDEIRMMSTGSKKSLLSHEFQDETDTEEETLYSSKH. Phosphoserine occurs at positions 1355 and 1358. The tract at residues 1356–1377 is disordered; it reads LLSHEFQDETDTEEETLYSSKH. A phosphothreonine mark is found at threonine 1365 and threonine 1367.

It belongs to the peptidase M14 family. Requires Zn(2+) as cofactor.

The protein resides in the cell membrane. The enzyme catalyses Releases C-terminal Arg and Lys from polypeptides.. This chain is Carboxypeptidase D (Cpd), found in Mus musculus (Mouse).